The following is a 780-amino-acid chain: Exocyst complex component 3-like protein (780 aa).

This sequence belongs to the SEC6 family.

Its subcellular location is the cytoplasmic vesicle. It localises to the secretory vesicle. Functionally, as part of the exocyst, may play a role in regulated exocytosis. This chain is Exocyst complex component 3-like protein (exoc3l1), found in Danio rerio (Zebrafish).